We begin with the raw amino-acid sequence, 305 residues long: tRNA dimethylallyltransferase (305 aa).

9-16 provides a ligand contact to ATP; it reads GPTASGKS. 11–16 provides a ligand contact to substrate; that stretch reads TASGKS. The tract at residues 34–37 is interaction with substrate tRNA; the sequence is DSKQ.

The protein belongs to the IPP transferase family. As to quaternary structure, monomer. Requires Mg(2+) as cofactor.

It catalyses the reaction adenosine(37) in tRNA + dimethylallyl diphosphate = N(6)-dimethylallyladenosine(37) in tRNA + diphosphate. Its function is as follows. Catalyzes the transfer of a dimethylallyl group onto the adenine at position 37 in tRNAs that read codons beginning with uridine, leading to the formation of N6-(dimethylallyl)adenosine (i(6)A). This chain is tRNA dimethylallyltransferase, found in Anaplasma marginale (strain St. Maries).